A 251-amino-acid chain; its full sequence is UPF0246 protein DSY0297 (251 aa).

This sequence belongs to the UPF0246 family.

This is UPF0246 protein DSY0297 from Desulfitobacterium hafniense (strain Y51).